We begin with the raw amino-acid sequence, 283 residues long: Hydroxyacylglutathione hydrolase-like protein (283 aa).

His-54, His-56, Asp-58, His-59, His-110, Asp-134, and His-173 together coordinate Zn(2+).

The protein belongs to the metallo-beta-lactamase superfamily. Glyoxalase II family. It depends on Zn(2+) as a cofactor.

In terms of biological role, hydrolase acting on ester bonds. The sequence is that of Hydroxyacylglutathione hydrolase-like protein (Haghl) from Mus musculus (Mouse).